Consider the following 175-residue polypeptide: Alpha-crystallin B chain (175 aa).

Met-1 carries the N-acetylmethionine modification. Ser-19 carries the post-translational modification Phosphoserine. O-linked (GlcNAc) serine glycosylation is present at Ser-41. Phosphoserine occurs at positions 45 and 59. A sHSP domain is found at 56–164 (RAPSWFDTGL…PERTIPITRE (109 aa)). His-83 contributes to the Zn(2+) binding site. The residue at position 92 (Lys-92) is an N6-acetyllysine. Zn(2+)-binding residues include His-104, Glu-106, His-111, and His-119. The segment at 142 to 175 (VLTVNGPRKQVSGPERTIPITREEKPAVTAAPKK) is disordered. The residue at position 166 (Lys-166) is an N6-acetyllysine. Thr-170 carries an O-linked (GlcNAc) threonine glycan.

This sequence belongs to the small heat shock protein (HSP20) family. Heteromer composed of three CRYAA and one CRYAB subunits. Aggregates with homologous proteins, including the small heat shock protein HSPB1, to form large heteromeric complexes. Inter-subunit bridging via zinc ions enhances stability, which is crucial as there is no protein turn over in the lens. Interacts with HSPBAP1 and TTN/titin. Interacts with TMEM109; in the cellular response to DNA damage. Interacts with DES; binds rapidly during early stages of DES filament assembly and a reduced binding seen in the later stages. Interacts with TMED10; the interaction mediates the translocation from the cytoplasm into the ERGIC (endoplasmic reticulum-Golgi intermediate compartment) and thereby secretion. Interacts with ATP6V1A and with MTOR, forming a ternary complex.

It localises to the cytoplasm. Its subcellular location is the nucleus. The protein localises to the secreted. It is found in the lysosome. Functionally, may contribute to the transparency and refractive index of the lens. Has chaperone-like activity, preventing aggregation of various proteins under a wide range of stress conditions. In lens epithelial cells, stabilizes the ATP6V1A protein, preventing its degradation by the proteasome. This chain is Alpha-crystallin B chain (CRYAB), found in Macaca fascicularis (Crab-eating macaque).